Reading from the N-terminus, the 595-residue chain is Aspartate--tRNA ligase (595 aa).

Glutamate 180 is an L-aspartate binding site. The interval 204–207 is aspartate; sequence QLFK. Arginine 226 contributes to the L-aspartate binding site. ATP is bound by residues 226–228 and glutamine 235; that span reads RDE. Histidine 454 is an L-aspartate binding site. Residue glutamate 488 coordinates ATP. Arginine 495 is an L-aspartate binding site. 540 to 543 is a binding site for ATP; it reads GLDR.

It belongs to the class-II aminoacyl-tRNA synthetase family. Type 1 subfamily. As to quaternary structure, homodimer.

It localises to the cytoplasm. The catalysed reaction is tRNA(Asp) + L-aspartate + ATP = L-aspartyl-tRNA(Asp) + AMP + diphosphate. Catalyzes the attachment of L-aspartate to tRNA(Asp) in a two-step reaction: L-aspartate is first activated by ATP to form Asp-AMP and then transferred to the acceptor end of tRNA(Asp). The sequence is that of Aspartate--tRNA ligase from Clostridium acetobutylicum (strain ATCC 824 / DSM 792 / JCM 1419 / IAM 19013 / LMG 5710 / NBRC 13948 / NRRL B-527 / VKM B-1787 / 2291 / W).